Here is a 387-residue protein sequence, read N- to C-terminus: MERPPPRAAGRDPSALRAEAPWLRAEGPGPRAAPVTVPTPPQGSSVGGGFAGLEFARPQESEPRASDLGAPRTWTGAAAGPRTPSAHIPVPAQRATPGKARLDEVMAAAALTSLSTSPLLLGAPVAAFSPEPGLEPWKEALVRPPGSYSSSSNSGDWGWDLASDQSSPSTPSPPLPPEAAHFLFGEPTLRKRKSPAQVMFQCLWKSCGKVLSTASAMQRHIRLVHLGRQAEPEQSDGEEDFYYTELDVGVDTLTDGLSSLTPVSPTASMPPAFPRLELPELLEPPALPSPLRPPAPPLPPPPVLSTVANPQSCHSDRVYQGCLTPARLEPQPTEVGACPPALSSRIGVTLRKPRGDAKKCRKVYGMERRDLWCTACRWKKACQRFLD.

Disordered regions lie at residues 1–97 (MERP…RATP) and 139–179 (EALV…PPEA). A compositionally biased stretch (low complexity) spans 27–36 (GPGPRAAPVT). The C2H2-type zinc-finger motif lies at 200-225 (FQCLWKSCGKVLSTASAMQRHIRLVH). A Nuclear export signal motif is present at residues 253–263 (LTDGLSSLTPV). Ser-264 and Ser-268 each carry phosphoserine. The tract at residues 283–305 (EPPALPSPLRPPAPPLPPPPVLS) is disordered. The segment covering 285–303 (PALPSPLRPPAPPLPPPPV) has biased composition (pro residues). A Nuclear localization signal motif is present at residues 351–354 (RKPR).

Interacts with MEF2A. As to expression, according to PubMed:14630949, expressed in heart, skeletal muscle, liver, kidney and pancreas; undetectable in lung, placenta or brain. According to PubMed:14625278, ubiquitously expressed, with lowest expression in brain and ileum.

It localises to the cytoplasm. The protein localises to the nucleus. Transcription factor involved in SLC2A4 and HD gene transactivation. Binds to the consensus sequence 5'-GCCGGCG-3'. In Homo sapiens (Human), this protein is SLC2A4 regulator (SLC2A4RG).